The primary structure comprises 451 residues: FAD-dependent monooxygenase adrH (451 aa).

Positions 39, 53, and 112 each coordinate FAD. Y196 is a catalytic residue. 2 residues coordinate FAD: D288 and A301. N-linked (GlcNAc...) asparagine glycosylation occurs at N385. The chain crosses the membrane as a helical span at residues 426 to 446 (TLLWVSSLALFLFFPWLGSYL).

Belongs to the paxM FAD-dependent monooxygenase family. Requires FAD as cofactor.

The protein localises to the membrane. Its pathway is secondary metabolite biosynthesis; terpenoid biosynthesis. Its function is as follows. FAD-dependent monooxygenase; part of the gene cluster that mediates the biosynthesis of andrastins, meroterpenoid compounds that exhibit inhibitory activity against ras farnesyltransferase, suggesting that they could be promising leads for antitumor agents. The first step of the pathway is the synthesis of 3,5-dimethylorsellinic acid (DMOA) by the polyketide synthase adrD via condensation of one acetyl-CoA starter unit with 3 malonyl-CoA units and 2 methylations. DMAO is then converted to farnesyl-DMAO by the prenyltransferase adrG. The methyltransferase adrK catalyzes the methylation of the carboxyl group of farnesyl-DMAO to farnesyl-DMAO methyl ester which is further converted to epoxyfarnesyl-DMAO methyl ester by the FAD-dependent monooxygenase adrH. The terpene cyclase adrI then catalyzes the carbon skeletal rearrangement to generate the andrastin E, the first compound in the pathway having the andrastin scaffold, with the tetracyclic ring system. The post-cyclization tailoring enzymes adrF, adrE, adrJ, and adrA, are involved in the conversion of andrastin E into andrastin A. The short chain dehydrogenase adrF is responsible for the oxidation of the C-3 a hydroxyl group of andrastin E to yield the corresponding ketone, andrastin D. The ketoreductase adrE stereoselectively reduces the carbonyl moiety to reverse the stereochemistry of the C-3 position to yield andrastin F. The acetyltransferase adrJ is the acetyltransferase that attaches the acetyl group to the C-3 hydroxyl group of andrastin F to yield andrastin C. Finally, the cytochrome P450 monooxygenase adrA catalyzes two sequential oxidation reactions of the C-23 methyl group, to generate the corresponding alcohol andrastin B, and aldehyde andrastin A. This is FAD-dependent monooxygenase adrH from Penicillium rubens (strain ATCC 28089 / DSM 1075 / NRRL 1951 / Wisconsin 54-1255) (Penicillium chrysogenum).